A 224-amino-acid chain; its full sequence is Ribonuclease T (224 aa).

The region spanning 20–194 is the Exonuclease domain; the sequence is VVIDVETAGF…YDTERTAELF (175 aa). Mg(2+) is bound by residues aspartate 23, glutamate 25, histidine 181, and aspartate 186. Catalysis depends on histidine 181, which acts as the Proton donor/acceptor.

This sequence belongs to the RNase T family. Homodimer. Mg(2+) is required as a cofactor.

Its function is as follows. Trims short 3' overhangs of a variety of RNA species, leaving a one or two nucleotide 3' overhang. Responsible for the end-turnover of tRNA: specifically removes the terminal AMP residue from uncharged tRNA (tRNA-C-C-A). Also appears to be involved in tRNA biosynthesis. The chain is Ribonuclease T from Shewanella putrefaciens (strain CN-32 / ATCC BAA-453).